We begin with the raw amino-acid sequence, 369 residues long: 3,4-dihydroxy-2-butanone 4-phosphate synthase (369 aa).

Positions 1 to 201 (MAFDRIEDII…IADLIHYRLS (201 aa)) are DHBP synthase. D-ribulose 5-phosphate-binding positions include 27-28 (RE), Asp-32, 140-144 (RAGHT), and Glu-164. Mg(2+) is bound at residue Glu-28. His-143 lines the Mg(2+) pocket. The tract at residues 202-369 (TEHTIVRIGE…EVIESIPFPG (168 aa)) is GTP cyclohydrolase II-like.

It in the N-terminal section; belongs to the DHBP synthase family. The protein in the C-terminal section; belongs to the GTP cyclohydrolase II family. Mg(2+) is required as a cofactor. The cofactor is Mn(2+).

The catalysed reaction is D-ribulose 5-phosphate = (2S)-2-hydroxy-3-oxobutyl phosphate + formate + H(+). It participates in cofactor biosynthesis; riboflavin biosynthesis; 2-hydroxy-3-oxobutyl phosphate from D-ribulose 5-phosphate: step 1/1. In terms of biological role, catalyzes the conversion of D-ribulose 5-phosphate to formate and 3,4-dihydroxy-2-butanone 4-phosphate. In Pseudomonas syringae pv. tomato (strain ATCC BAA-871 / DC3000), this protein is 3,4-dihydroxy-2-butanone 4-phosphate synthase (ribB).